Consider the following 191-residue polypeptide: Probable GTP-binding protein EngB (191 aa).

The EngB-type G domain maps to 22-190 (RLPEIAFLGR…WQAITTTLQA (169 aa)). GTP contacts are provided by residues 30 to 37 (GRSNVGKS), 57 to 61 (GRTQT), 75 to 78 (DLPG), 142 to 145 (TKTD), and 169 to 171 (FSA). Residues Ser-37 and Thr-59 each contribute to the Mg(2+) site.

The protein belongs to the TRAFAC class TrmE-Era-EngA-EngB-Septin-like GTPase superfamily. EngB GTPase family. Requires Mg(2+) as cofactor.

Its function is as follows. Necessary for normal cell division and for the maintenance of normal septation. This chain is Probable GTP-binding protein EngB, found in Solibacter usitatus (strain Ellin6076).